We begin with the raw amino-acid sequence, 191 residues long: MTSRGDSREKILHTASRLFQLQGYHATGLNQIVKESGAPKGSLYHFFPNGKEELAIEAVTYTGKIVEHLIQQSMDESSDPVEAIQLFIKKTASQFDNTESIKGIPVGLLASETALISEPLRTVCMKVFKSWEAVFARKLMENGFAEEEANQLGTLINSMIEGGIMLSLTNKDKTPLLLIAEQIPVLVRKKG.

Residues glycine 5–isoleucine 65 enclose the HTH tetR-type domain. The H-T-H motif DNA-binding region spans glycine 28–phenylalanine 47.

This is an uncharacterized protein from Bacillus subtilis (strain 168).